The following is a 166-amino-acid chain: Crossover junction endodeoxyribonuclease RuvC (166 aa).

Residues Asp-12, Glu-71, and Asp-143 contribute to the active site. The Mg(2+) site is built by Asp-12, Glu-71, and Asp-143.

It belongs to the RuvC family. Homodimer which binds Holliday junction (HJ) DNA. The HJ becomes 2-fold symmetrical on binding to RuvC with unstacked arms; it has a different conformation from HJ DNA in complex with RuvA. In the full resolvosome a probable DNA-RuvA(4)-RuvB(12)-RuvC(2) complex forms which resolves the HJ. Requires Mg(2+) as cofactor.

It is found in the cytoplasm. It carries out the reaction Endonucleolytic cleavage at a junction such as a reciprocal single-stranded crossover between two homologous DNA duplexes (Holliday junction).. Its function is as follows. The RuvA-RuvB-RuvC complex processes Holliday junction (HJ) DNA during genetic recombination and DNA repair. Endonuclease that resolves HJ intermediates. Cleaves cruciform DNA by making single-stranded nicks across the HJ at symmetrical positions within the homologous arms, yielding a 5'-phosphate and a 3'-hydroxyl group; requires a central core of homology in the junction. The consensus cleavage sequence is 5'-(A/T)TT(C/G)-3'. Cleavage occurs on the 3'-side of the TT dinucleotide at the point of strand exchange. HJ branch migration catalyzed by RuvA-RuvB allows RuvC to scan DNA until it finds its consensus sequence, where it cleaves and resolves the cruciform DNA. This is Crossover junction endodeoxyribonuclease RuvC from Oleidesulfovibrio alaskensis (strain ATCC BAA-1058 / DSM 17464 / G20) (Desulfovibrio alaskensis).